The chain runs to 172 residues: Early nodulin-like protein 17 (172 aa).

The signal sequence occupies residues Met1–Ala26. The Phytocyanin domain maps to Lys27 to Lys127. Asn42, Asn73, Asn88, and Asn101 each carry an N-linked (GlcNAc...) asparagine glycan. A disulfide bridge links Cys80 with Cys115. Gly141 carries GPI-anchor amidated glycine lipidation. Residues Ser142 to Trp172 constitute a propeptide, removed in mature form.

It belongs to the early nodulin-like (ENODL) family.

It is found in the cell membrane. Functionally, may act as a carbohydrate transporter. The chain is Early nodulin-like protein 17 from Arabidopsis thaliana (Mouse-ear cress).